A 387-amino-acid polypeptide reads, in one-letter code: METSMACCSRSIVLPRVSPQHSSALVPSSINLKSLKSSSLFGESLRMTTKSSVRVNKAKNSSLVTKCELGDSLEEFLAKATTDKGLIRLMMCMGEALRTIGFKVRTASCGGTQCVNTFGDEQLAIDVLADKLLFEALNYSHFCKYACSEELPELQDMGGPVDGGFSVAFDPLDGSSIVDTNFSVGTIFGVWPGDKLTGVTGRDQVAAAMGIYGPRTTYVLALKDYPGTHEFLLLDEGKWQHVKETTEINEGKLFCPGNLRATSDNADYAKLIQYYIKEKYTLRYTGGMVPDVNQIIVKEKGIFTNVISPTAKAKLRLLFEVAPLGFLIEKAGGHSSEGTKSVLDIEVKNLDDRTQVAYGSLNEIIRFEKTLYGSSRLEEPVPVGAAA.

A disulfide bridge links cysteine 109 with cysteine 114. Mg(2+) contacts are provided by aspartate 120, glutamate 149, aspartate 170, leucine 172, and aspartate 173. Substrate contacts are provided by residues aspartate 173 to serine 176, tyrosine 284, and lysine 314. Glutamate 320 provides a ligand contact to Mg(2+).

The protein belongs to the FBPase class 1 family. In terms of assembly, homodimer. Mg(2+) serves as cofactor.

It is found in the plastid. It localises to the chloroplast. It carries out the reaction D-sedoheptulose 1,7-bisphosphate + H2O = D-sedoheptulose 7-phosphate + phosphate. It participates in carbohydrate biosynthesis; Calvin cycle. In Spinacia oleracea (Spinach), this protein is Sedoheptulose-1,7-bisphosphatase, chloroplastic.